The sequence spans 367 residues: Peptide chain release factor 1 (367 aa).

Q243 carries the post-translational modification N5-methylglutamine.

The protein belongs to the prokaryotic/mitochondrial release factor family. Methylated by PrmC. Methylation increases the termination efficiency of RF1.

The protein resides in the cytoplasm. Peptide chain release factor 1 directs the termination of translation in response to the peptide chain termination codons UAG and UAA. The sequence is that of Peptide chain release factor 1 from Acidovorax ebreus (strain TPSY) (Diaphorobacter sp. (strain TPSY)).